Here is a 648-residue protein sequence, read N- to C-terminus: Probable alpha-galactosidase D (648 aa).

The signal sequence occupies residues 1–16; it reads MEFIVSLLLLSPALVA. Asparagine 84 and asparagine 90 each carry an N-linked (GlcNAc...) asparagine glycan. Residues cysteine 123 and cysteine 156 are joined by a disulfide bond. The active-site Nucleophile is aspartate 154. 199 to 203 is a binding site for substrate; it reads EWGID. Residue aspartate 221 is the Proton donor of the active site. Asparagine 339, asparagine 350, asparagine 505, and asparagine 572 each carry an N-linked (GlcNAc...) asparagine glycan.

This sequence belongs to the glycosyl hydrolase 27 family.

Its subcellular location is the secreted. The enzyme catalyses Hydrolysis of terminal, non-reducing alpha-D-galactose residues in alpha-D-galactosides, including galactose oligosaccharides, galactomannans and galactolipids.. Its function is as follows. Hydrolyzes a variety of simple alpha-D-galactoside as well as more complex molecules such as oligosaccharides and polysaccharides. The polypeptide is Probable alpha-galactosidase D (aglD) (Aspergillus fumigatus (strain CBS 144.89 / FGSC A1163 / CEA10) (Neosartorya fumigata)).